The following is a 178-amino-acid chain: Large ribosomal subunit protein uL6 (178 aa).

It belongs to the universal ribosomal protein uL6 family. Part of the 50S ribosomal subunit.

Functionally, this protein binds to the 23S rRNA, and is important in its secondary structure. It is located near the subunit interface in the base of the L7/L12 stalk, and near the tRNA binding site of the peptidyltransferase center. The protein is Large ribosomal subunit protein uL6 of Wolinella succinogenes (strain ATCC 29543 / DSM 1740 / CCUG 13145 / JCM 31913 / LMG 7466 / NCTC 11488 / FDC 602W) (Vibrio succinogenes).